Here is a 222-residue protein sequence, read N- to C-terminus: Small ribosomal subunit protein eS1 (222 aa).

This sequence belongs to the eukaryotic ribosomal protein eS1 family.

The protein is Small ribosomal subunit protein eS1 of Pyrobaculum neutrophilum (strain DSM 2338 / JCM 9278 / NBRC 100436 / V24Sta) (Thermoproteus neutrophilus).